Here is a 27-residue protein sequence, read N- to C-terminus: NIVDVPCRDDYYRDSDGNCVCCKFGGA.

Its subcellular location is the secreted. It localises to the nematocyst. Functionally, possible voltage-gated potassium channel (Kv) blocker. The polypeptide is Toxin Bcg III 21.00 (Bunodosoma cangicum (Sea anemone)).